We begin with the raw amino-acid sequence, 105 residues long: Putative membrane protein insertion efficiency factor (105 aa).

It belongs to the UPF0161 family.

Its subcellular location is the cell membrane. Its function is as follows. Could be involved in insertion of integral membrane proteins into the membrane. The protein is Putative membrane protein insertion efficiency factor of Bifidobacterium longum subsp. infantis (strain ATCC 15697 / DSM 20088 / JCM 1222 / NCTC 11817 / S12).